The chain runs to 281 residues: DegV domain-containing protein CPE2509 (281 aa).

The DegV domain occupies 4-279; the sequence is IAIITDSSCD…PGMVGVSIQK (276 aa). 2 residues coordinate hexadecanoate: Thr60 and Ser93.

In terms of biological role, may bind long-chain fatty acids, such as palmitate, and may play a role in lipid transport or fatty acid metabolism. In Clostridium perfringens (strain 13 / Type A), this protein is DegV domain-containing protein CPE2509.